Consider the following 269-residue polypeptide: 4-hydroxy-tetrahydrodipicolinate reductase (269 aa).

An NAD(+)-binding site is contributed by 11 to 16; sequence GPIGRM. Residue lysine 39 coordinates NADP(+). Residues 101–103 and 125–128 each bind NAD(+); these read GTT and ASNF. The active-site Proton donor/acceptor is the histidine 158. Histidine 159 is a binding site for (S)-2,3,4,5-tetrahydrodipicolinate. The active-site Proton donor is lysine 162. 168–169 contacts (S)-2,3,4,5-tetrahydrodipicolinate; the sequence is GT.

Belongs to the DapB family. In terms of assembly, homotetramer.

It is found in the cytoplasm. It catalyses the reaction (S)-2,3,4,5-tetrahydrodipicolinate + NAD(+) + H2O = (2S,4S)-4-hydroxy-2,3,4,5-tetrahydrodipicolinate + NADH + H(+). It carries out the reaction (S)-2,3,4,5-tetrahydrodipicolinate + NADP(+) + H2O = (2S,4S)-4-hydroxy-2,3,4,5-tetrahydrodipicolinate + NADPH + H(+). It functions in the pathway amino-acid biosynthesis; L-lysine biosynthesis via DAP pathway; (S)-tetrahydrodipicolinate from L-aspartate: step 4/4. Catalyzes the conversion of 4-hydroxy-tetrahydrodipicolinate (HTPA) to tetrahydrodipicolinate. The protein is 4-hydroxy-tetrahydrodipicolinate reductase of Buchnera aphidicola subsp. Acyrthosiphon pisum (strain 5A).